Reading from the N-terminus, the 159-residue chain is Keratin-associated protein 9-3 (159 aa).

16 repeat units span residues 8 to 12 (CCQPT), 13 to 17 (CCRTT), 32 to 36 (CCQPS), 37 to 41 (CCVSS), 46 to 50 (CCHPT), 51 to 55 (CCQNT), 56 to 60 (CCRTT), 61 to 65 (CCQPI), 70 to 74 (CCQPS), 75 to 79 (CCSTP), 80 to 84 (CCQPT), 85 to 89 (CCGSS), 129 to 133 (CCRPA), 134 to 138 (CCETT), 139 to 143 (CCRTT), and 153 to 157 (CCQPS). Positions 8–157 (CCQPTCCRTT…TCVYSCCQPS (150 aa)) are 16 X 5 AA repeats of C-C-[RQVSHE]-[SPTN]-[TASPI].

It belongs to the KRTAP type 9 family. Interacts with hair keratins.

In terms of biological role, in the hair cortex, hair keratin intermediate filaments are embedded in an interfilamentous matrix, consisting of hair keratin-associated proteins (KRTAP), which are essential for the formation of a rigid and resistant hair shaft through their extensive disulfide bond cross-linking with abundant cysteine residues of hair keratins. The matrix proteins include the high-sulfur and high-glycine-tyrosine keratins. This Homo sapiens (Human) protein is Keratin-associated protein 9-3 (KRTAP9-3).